Here is a 525-residue protein sequence, read N- to C-terminus: Ubiquitin carboxyl-terminal hydrolase 22 (525 aa).

The segment at 21–138 (PGCSHLGSFK…KEEQRKAWKM (118 aa)) adopts a UBP-type zinc-finger fold. 12 residues coordinate Zn(2+): C23, H25, C63, C66, C76, C79, C84, H89, H93, H99, C112, and C115. N6-acetyllysine is present on K129. T147 is subject to Phosphothreonine. Residues 176–520 (RGLINLGNTC…EGYLLFYHKQ (345 aa)) enclose the USP domain. C185 functions as the Nucleophile in the catalytic mechanism. Position 237 is a phosphoserine (S237). Residue H479 is the Proton acceptor of the active site.

It belongs to the peptidase C19 family. UBP8 subfamily. Component of some SAGA transcription coactivator-HAT complexes, at least composed of ATXN7, ATXN7L3, ENY2, GCN5L2, SUPT3H, TAF10, TRRAP and USP22. Within the SAGA complex, ATXN7L3, ENY2 and USP22 form a subcomplex required for histone deubiquitination. Interacts directly with ATXN7L3; leading to its recruitment to the SAGA complex. Interacts with ATXN7L3 and weakly with ATXN7L3B. Interacts with MED1. Post-translationally, phosphorylated in G2/M phase, but not in G1 phase by CDK1. Ubiquitinated and subsequently degraded in a CDC20-dependent manner. Highly expressed in brain and weakly in other organs.

Its subcellular location is the nucleus. It is found in the cytoplasm. It carries out the reaction Thiol-dependent hydrolysis of ester, thioester, amide, peptide and isopeptide bonds formed by the C-terminal Gly of ubiquitin (a 76-residue protein attached to proteins as an intracellular targeting signal).. Functionally, deubiquitinase that plays a role in several cellular processes including transcriptional regulation, cell cycle progression or innate immunity. As part of the transcription regulatory histone acetylation (HAT) complex SAGA, catalyzes the deubiquitination of both histones H2A and H2B, thereby acting as a transcriptional coactivator. Recruited to specific gene promoters by activators such as MYC, where it is required for transcription. Facilitates cell-cycle progression by stabilizing CCNB1 and antagonizing its proteasome-mediated degradation in a cell cycle-specific manner. Modulates cell cycle progression and apoptosis also by antagonizing TP53 transcriptional activation through deacetylase SIRT1 stabilization. Plays multiple roles in immunity and inflammation. Participates in antiviral response by deubiquitinating the importin KPNA2, leading to IRF3 nuclear translocation and subsequent type I interferon production. Acts as a central regulator of type III IFN signaling by negatively regulating STING1 activation and ubiquitination. Inhibits NLRP3 inflammasome activation by promoting NLRP3 degradation through ATG5-dependent autophagy. Deubiquitinates CD274 to induce its stabilization and thereby participates in maintenance of immune tolerance to self. Controls necroptotic cell death by regulating RIPK3 phosphorylation and ubiquitination. During bacterial infection, promotes pro-inflammatory response by targeting TRAF6 and removing its 'Lys-48'-linked polyubiquitination. The sequence is that of Ubiquitin carboxyl-terminal hydrolase 22 (Usp22) from Mus musculus (Mouse).